We begin with the raw amino-acid sequence, 773 residues long: DNA polymerase (773 aa).

Residues 1–131 are N-terminal domain; that stretch reads MILDADYITE…IDRGLIPMEG (131 aa). The interval 133 to 385 is exonuclease domain; the sequence is EELRMLAFDI…ELARRTESYA (253 aa). Mg(2+)-binding residues include D141, E143, and D315. The interval 390-773 is polymerase domain; it reads KEPEKGLWEN…GLGAWLKPKT (384 aa). 2 disulfide bridges follow: C428–C442 and C506–C509.

The protein belongs to the DNA polymerase type-B family. It depends on Mg(2+) as a cofactor.

It carries out the reaction DNA(n) + a 2'-deoxyribonucleoside 5'-triphosphate = DNA(n+1) + diphosphate. With respect to regulation, DNA polymerase activity strongly inhibited by uracil-containing oligonucleotides. Thermostable DNA polymerase. In addition to polymerase activity, this DNA polymerase exhibits 3' to 5' exonuclease activity. This chain is DNA polymerase (pol), found in Desulfurococcus sp. (strain Tok).